Here is a 992-residue protein sequence, read N- to C-terminus: Vacuolar membrane protease (992 aa).

At 1–24 (MSPAMANPRVRKFNPIAFTPLPVT) the chain is on the cytoplasmic side. The chain crosses the membrane as a helical span at residues 25-45 (FITTIVYLAVLILVLVTYLVV). The Vacuolar segment spans residues 46-390 (PPAPTLEMSP…SAFAVFRLHT (345 aa)). N-linked (GlcNAc...) asparagine glycans are attached at residues asparagine 59, asparagine 115, and asparagine 118. Zn(2+) is bound by residues histidine 174 and aspartate 186. Glutamate 220 acts as the Proton acceptor in catalysis. Glutamate 221 contacts Zn(2+). N-linked (GlcNAc...) asparagine glycosylation occurs at asparagine 237. Glutamate 246 and histidine 319 together coordinate Zn(2+). The helical transmembrane segment at 391–411 (LFALSVTLLVIGPLVLFITSI) threads the bilayer. Residues 412 to 446 (ALSKTDRMYLFSMSKSLGGASETVSLRGLRGLFRT) lie on the Cytoplasmic side of the membrane. Residues 447 to 467 (PIILTVTTVIPIGLAYLLEKI) form a helical membrane-spanning segment. The Vacuolar portion of the chain corresponds to 468–474 (NPYIVHS). A helical transmembrane segment spans residues 475–495 (SQFAVWSMMLSVWIFVAWFLA). At 496–508 (RVADFFRPSALHR) the chain is on the cytoplasmic side. The chain crosses the membrane as a helical span at residues 509-529 (AYSYTWIFIVTWIMLVISTVY). The Vacuolar segment spans residues 530–533 (ANQK). Residues 534 to 554 (GIAAGYFTFFYFAAVFLATWV) traverse the membrane as a helical segment. The Cytoplasmic portion of the chain corresponds to 555-671 (SYLELFSLPR…WSWTLPRWTW (117 aa)). The disordered stretch occupies residues 579 to 620 (RSSSLSSRLLTPSADELPSDIGPNGAENVGDPDETDPTESTS). The helical transmembrane segment at 672–692 (ILQLLLLAPIVIILVGQVGLL) threads the bilayer. Topologically, residues 693–708 (LTTAMSQIGSDGVSTF) are vacuolar. A helical membrane pass occupies residues 709 to 729 (IVYLACALFSTLLFAPLLPFI). The Cytoplasmic segment spans residues 730 to 736 (HRFTYHV). A helical transmembrane segment spans residues 737–757 (PTFLLLIFIGTLIYNLVAFPF). Over 758-992 (SPANRLKIFF…VEASHDFIIQ (235 aa)) the chain is Vacuolar. N-linked (GlcNAc...) asparagine glycosylation is found at asparagine 805, asparagine 846, and asparagine 954.

This sequence belongs to the peptidase M28 family. Requires Zn(2+) as cofactor.

It localises to the vacuole membrane. May be involved in vacuolar sorting and osmoregulation. This Paracoccidioides brasiliensis (strain Pb03) protein is Vacuolar membrane protease.